Here is a 202-residue protein sequence, read N- to C-terminus: MPNDRVAPLPPNFVYSPHDKFYYAPATCNSMHYTTASYISAFIEFLVMGTGAICFYVMSHKSDSIGKWLFYIQAGITVLSLLTSALMAFGLWKENPQMLGSKLKFIEFIICFLLIWAVISIVCMAFGIQFTRQVFGIFGKVHRIEQDYGPIWPFNIAVVSFFTAAIAIWTRIIIQGAADYLYDKAYFADKQNVELRESSKTR.

The Cytoplasmic portion of the chain corresponds to 1 to 37 (MPNDRVAPLPPNFVYSPHDKFYYAPATCNSMHYTTAS). The helical transmembrane segment at 38–58 (YISAFIEFLVMGTGAICFYVM) threads the bilayer. The Extracellular segment spans residues 59–68 (SHKSDSIGKW). The chain crosses the membrane as a helical span at residues 69 to 89 (LFYIQAGITVLSLLTSALMAF). At 90–107 (GLWKENPQMLGSKLKFIE) the chain is on the cytoplasmic side. A helical membrane pass occupies residues 108 to 128 (FIICFLLIWAVISIVCMAFGI). Residues 129 to 148 (QFTRQVFGIFGKVHRIEQDY) lie on the Extracellular side of the membrane. Residues 149 to 169 (GPIWPFNIAVVSFFTAAIAIW) form a helical membrane-spanning segment. At 170–202 (TRIIIQGAADYLYDKAYFADKQNVELRESSKTR) the chain is on the cytoplasmic side.

Interacts with vps-39.

Its subcellular location is the cell membrane. The protein localises to the cytoplasm. In terms of biological role, involved in cuticle formation and ensures cuticle shedding during larval development. Plays a role in maintaining the hypodermis. In association with vps-39, may play a role in vesicle tethering. This chain is Protein cuti-1, found in Caenorhabditis elegans.